Consider the following 382-residue polypeptide: MHGRRHLAASLARALTYAPSRSISSTPSLLQTLDPSTPSPAAAPPTAGRLAELRQRLQADAPSLGDFTYSVEVGTRKKPLPKPKWMKETIPGGAKYAGIKAKLRELKLHTVCEEARCPNLGECWSGGETGTATATIMILGDTCTRGCRFCNVKTSRTPPPPDPDEPSNVAQAIASWGLEYIVITSVDRDDLPDQGSGHFAETVQKLKVLKPEMLIEALVPDFRGDPACVEKVATSGLHVFAHNIETVEELQRNVRDHRANFKQSIDVLKLAKEYAPAGTLTKTSIMLGCGETPDQVISTTEKVRAAGVDVMTFGQYMRPSKRHMPVSEYVTPEAFERYRSLGVDMGFRYVASGPMVRSSYKAGEFYIKAMIEADRAKATTAI.

The N-terminal 30 residues, 1-30, are a transit peptide targeting the mitochondrion; that stretch reads MHGRRHLAASLARALTYAPSRSISSTPSLL. The span at 25–34 shows a compositional bias: polar residues; that stretch reads STPSLLQTLD. The segment at 25-46 is disordered; the sequence is STPSLLQTLDPSTPSPAAAPPT. [4Fe-4S] cluster is bound by residues cysteine 112, cysteine 117, cysteine 123, cysteine 143, cysteine 147, cysteine 150, and serine 359. The Radical SAM core domain occupies 128-348; sequence ETGTATATIM…RSLGVDMGFR (221 aa).

The protein belongs to the radical SAM superfamily. Lipoyl synthase family. Requires [4Fe-4S] cluster as cofactor.

The protein resides in the mitochondrion. The catalysed reaction is [[Fe-S] cluster scaffold protein carrying a second [4Fe-4S](2+) cluster] + N(6)-octanoyl-L-lysyl-[protein] + 2 oxidized [2Fe-2S]-[ferredoxin] + 2 S-adenosyl-L-methionine + 4 H(+) = [[Fe-S] cluster scaffold protein] + N(6)-[(R)-dihydrolipoyl]-L-lysyl-[protein] + 4 Fe(3+) + 2 hydrogen sulfide + 2 5'-deoxyadenosine + 2 L-methionine + 2 reduced [2Fe-2S]-[ferredoxin]. The protein operates within protein modification; protein lipoylation via endogenous pathway; protein N(6)-(lipoyl)lysine from octanoyl-[acyl-carrier-protein]: step 2/2. Catalyzes the radical-mediated insertion of two sulfur atoms into the C-6 and C-8 positions of the octanoyl moiety bound to the lipoyl domains of lipoate-dependent enzymes, thereby converting the octanoylated domains into lipoylated derivatives. This is Lipoyl synthase, mitochondrial from Oryza sativa subsp. japonica (Rice).